Consider the following 450-residue polypeptide: Glucose-6-phosphate isomerase (450 aa).

The Proton donor role is filled by Glu-291. Catalysis depends on residues His-312 and Lys-426.

It belongs to the GPI family.

The protein resides in the cytoplasm. It catalyses the reaction alpha-D-glucose 6-phosphate = beta-D-fructose 6-phosphate. The protein operates within carbohydrate biosynthesis; gluconeogenesis. It functions in the pathway carbohydrate degradation; glycolysis; D-glyceraldehyde 3-phosphate and glycerone phosphate from D-glucose: step 2/4. Its function is as follows. Catalyzes the reversible isomerization of glucose-6-phosphate to fructose-6-phosphate. The protein is Glucose-6-phosphate isomerase of Clostridium novyi (strain NT).